The sequence spans 1894 residues: Plexin-A4 (1894 aa).

A signal peptide spans 1 to 23; the sequence is MKAMPWNWTCLLSHLLMVGMGSS. Residues 24–507 form the Sema domain; that stretch reads TLLTRQPAPL…SERQLTRVPV (484 aa). The Extracellular segment spans residues 24-1237; that stretch reads TLLTRQPAPL…IAPDSPLSLP (1214 aa). 10 cysteine pairs are disulfide-bonded: Cys-95–Cys-104, Cys-130–Cys-138, Cys-284–Cys-405, Cys-300–Cys-356, Cys-374–Cys-393, Cys-510–Cys-527, Cys-516–Cys-558, Cys-519–Cys-536, Cys-530–Cys-542, and Cys-593–Cys-612. The 51-residue stretch at 509–559 folds into the PSI 1 domain; that stretch reads SCGQYQSCGECLGSGDPHCGWCVLHNTCTRKERCERSKEPRRFASEMKQCV. Asn-655 carries an N-linked (GlcNAc...) asparagine glycan. PSI domains lie at 655–702 and 803–856; these read NCSV…EDCP and KCGA…SKCT. IPT/TIG domains lie at 858–952, 954–1037, 1040–1139, and 1142–1230; these read PRIT…YYFM, LTLS…FQYV, PTIV…FTYY, and PVFE…YIAP. N-linked (GlcNAc...) asparagine glycosylation is found at Asn-1007, Asn-1132, and Asn-1180. Residues 1238–1258 form a helical membrane-spanning segment; the sequence is AIVSIAVAGGLLIIFIVAVLI. Residues 1259 to 1894 are Cytoplasmic-facing; sequence AYKRKSRESD…QVITLMSLDS (636 aa). Lys-1350 bears the N6-acetyllysine mark.

Belongs to the plexin family. Interacts with NRP1 and NRP2.

The protein localises to the cell membrane. In terms of biological role, coreceptor for SEMA3A. Necessary for signaling by class 3 semaphorins and subsequent remodeling of the cytoskeleton. Plays a role in axon guidance in the developing nervous system. Class 3 semaphorins bind to a complex composed of a neuropilin and a plexin. The plexin modulates the affinity of the complex for specific semaphorins, and its cytoplasmic domain is required for the activation of down-stream signaling events in the cytoplasm. In Homo sapiens (Human), this protein is Plexin-A4 (PLXNA4).